The sequence spans 1164 residues: Nuclear exosome regulator NRDE2 (1164 aa).

2 disordered regions span residues Met1–Trp25 and Leu39–Phe149. Residue Ala2 is modified to N-acetylalanine. Over residues Leu61 to Lys73 the composition is skewed to basic and acidic residues. A coiled-coil region spans residues Leu61–Leu383. A compositionally biased stretch (basic residues) spans Lys74–Gly103. Positions Ser110–Glu133 are enriched in basic and acidic residues. An MID/MTR4-interacting domain region spans residues Phe163–Thr266. A disordered region spans residues Thr279 to Ala305. 5 HAT repeats span residues Ala305 to Glu337, Trp395 to Ser427, Ser758 to Leu792, Tyr978 to Lys1010, and Gly1067 to Ser1101.

The protein belongs to the NRDE2 family. Interacts with MTREX; the interaction is direct and stabilizes NRDE2. Interacts with EXOSC10, EFTUD2 and EIF4A3.

The protein resides in the nucleus speckle. The protein localises to the nucleus. Its subcellular location is the nucleolus. It is found in the nucleoplasm. In terms of biological role, protein of the nuclear speckles that regulates RNA degradation and export from the nucleus through its interaction with MTREX an essential factor directing various RNAs to exosomal degradation. Changes the conformation of MTREX, precluding its association with the nuclear exosome and interaction with proteins required for its function in RNA exosomal degradation. Negatively regulates, for instance, the degradation of mRNAs and lncRNAs by inhibiting their MTREX-mediated recruitment to nuclear exosome. By preventing the degradation of RNAs in the nucleus, it promotes their export to the cytoplasm. U5 snRNP-associated RNA splicing factor which is required for efficient splicing of CEP131 pre-mRNA and plays an important role in centrosome maturation, integrity and function during mitosis. Suppresses intron retention in a subset of pre-mRNAs containing short, GC-rich introns with relatively weak 5' and 3' splice sites. Plays a role in DNA damage response. This chain is Nuclear exosome regulator NRDE2, found in Homo sapiens (Human).